Here is a 293-residue protein sequence, read N- to C-terminus: Glutamyl-Q tRNA(Asp) synthetase (293 aa).

L-glutamate is bound by residues arginine 8–threonine 12 and glutamate 44. The 'HIGH' region signature appears at proline 11–serine 21. 4 residues coordinate Zn(2+): cysteine 100, cysteine 102, tyrosine 114, and cysteine 118. The L-glutamate site is built by tyrosine 171 and arginine 189. The short motif at lysine 227–serine 231 is the 'KMSKS' region element. Residue lysine 230 participates in ATP binding.

It belongs to the class-I aminoacyl-tRNA synthetase family. GluQ subfamily. The cofactor is Zn(2+).

Catalyzes the tRNA-independent activation of glutamate in presence of ATP and the subsequent transfer of glutamate onto a tRNA(Asp). Glutamate is transferred on the 2-amino-5-(4,5-dihydroxy-2-cyclopenten-1-yl) moiety of the queuosine in the wobble position of the QUC anticodon. The sequence is that of Glutamyl-Q tRNA(Asp) synthetase from Pseudomonas aeruginosa (strain ATCC 15692 / DSM 22644 / CIP 104116 / JCM 14847 / LMG 12228 / 1C / PRS 101 / PAO1).